Here is a 539-residue protein sequence, read N- to C-terminus: Eukaryotic translation initiation factor 3 subunit L (539 aa).

The region spanning 306 to 514 (TFSDILLYIQ…IHIADTKVSH (209 aa)) is the PCI domain.

The protein belongs to the eIF-3 subunit L family. In terms of assembly, component of the eukaryotic translation initiation factor 3 (eIF-3) complex. The eIF-3 complex interacts with pix.

Its subcellular location is the cytoplasm. Functionally, component of the eukaryotic translation initiation factor 3 (eIF-3) complex, which is involved in protein synthesis of a specialized repertoire of mRNAs and, together with other initiation factors, stimulates binding of mRNA and methionyl-tRNAi to the 40S ribosome. The eIF-3 complex specifically targets and initiates translation of a subset of mRNAs involved in cell proliferation. This is Eukaryotic translation initiation factor 3 subunit L from Drosophila sechellia (Fruit fly).